The primary structure comprises 514 residues: GMP synthase [glutamine-hydrolyzing] (514 aa).

A Glutamine amidotransferase type-1 domain is found at 7-197; the sequence is KVLILDFGSQ…LFNICKCERN (191 aa). The active-site Nucleophile is C84. Active-site residues include H171 and E173. The GMPS ATP-PPase domain maps to 198–389; it reads WNMGSFIEYE…LKLPEDIVYR (192 aa). 225–231 serves as a coordination point for ATP; sequence SGGVDSS.

Homodimer.

The enzyme catalyses XMP + L-glutamine + ATP + H2O = GMP + L-glutamate + AMP + diphosphate + 2 H(+). Its pathway is purine metabolism; GMP biosynthesis; GMP from XMP (L-Gln route): step 1/1. Functionally, catalyzes the synthesis of GMP from XMP. The chain is GMP synthase [glutamine-hydrolyzing] from Brachyspira hyodysenteriae (strain ATCC 49526 / WA1).